A 146-amino-acid polypeptide reads, in one-letter code: UPF0306 protein HD_1359 (146 aa).

The protein belongs to the UPF0306 family.

This Haemophilus ducreyi (strain 35000HP / ATCC 700724) protein is UPF0306 protein HD_1359.